A 188-amino-acid chain; its full sequence is ATP synthase subunit delta (188 aa).

This sequence belongs to the ATPase delta chain family. In terms of assembly, F-type ATPases have 2 components, F(1) - the catalytic core - and F(0) - the membrane proton channel. F(1) has five subunits: alpha(3), beta(3), gamma(1), delta(1), epsilon(1). F(0) has three main subunits: a(1), b(2) and c(10-14). The alpha and beta chains form an alternating ring which encloses part of the gamma chain. F(1) is attached to F(0) by a central stalk formed by the gamma and epsilon chains, while a peripheral stalk is formed by the delta and b chains.

Its subcellular location is the cell inner membrane. In terms of biological role, f(1)F(0) ATP synthase produces ATP from ADP in the presence of a proton or sodium gradient. F-type ATPases consist of two structural domains, F(1) containing the extramembraneous catalytic core and F(0) containing the membrane proton channel, linked together by a central stalk and a peripheral stalk. During catalysis, ATP synthesis in the catalytic domain of F(1) is coupled via a rotary mechanism of the central stalk subunits to proton translocation. Its function is as follows. This protein is part of the stalk that links CF(0) to CF(1). It either transmits conformational changes from CF(0) to CF(1) or is implicated in proton conduction. The chain is ATP synthase subunit delta from Rhizobium rhizogenes (strain K84 / ATCC BAA-868) (Agrobacterium radiobacter).